Consider the following 1017-residue polypeptide: MSIILPDWVAHHNDDKKGKLSTIFSVAVHPDSSRLATAGLDTKIRIWATATILNPRAENNSNSHRLLSTLSRHTGSVLVVRWANSGRFLASGSDDTVALIWDLDPSGMGGGSFGSSEVNIESWRPYRRLAGHESDVVDLAWADDDEFIATVGLDSKVIVWSGTHFDRLRIIDGHQGFVKGVVFDPLGQYLATASDDKTVKVWRTSDWGLERSITDPFLTSPSTAFFRRPSWSPDGSLLLCANAMSGPVFVASVVKRSSWSSDIYFVGHENAVVVTAFSPKIFVGFDGGTHSCVVALGSLDQSVSIWVTGLEQPVLVARDVFERQVMDLSWSADGYTLYACSSDGTVAVFHLSPELISDALSAEKLEQSRAKHGVKRVRNVAAATNGALPIGTSDRPNMLQPRKAGQSQAARASVPPVPIAGSVPPVRPIASRTERLHQTITITKDGKRRIRPTLIGDDLEPSQAVSHHHAYQPAPTSHALMPSIQQHQLPAMREAIGGTTVDGFGARPGVNGIHAGMTNSVSDGTAAAVVEAVLAAQRSNPAAMTTPMAAASSMMPYVPIGLPFGIMPEGASPEDMMQFWTEFQQRFMRGKKRKAEDAEAGSDSDDIEPIGKLQKGKTRADIGRTLGSEHPRDPPGPKKVLREALTGASGIVENGVRKGVHLAVPETLSIYRRDEDGLSIEIRNFDESRPTEIARLDPSDKDRVLWLDFSPTAATLATATSFFSAVALEDSTVLIYSSRGGRIGNLLLDSACYRLESNGVVLMAVTVAGLMYRWNIRADHEIHRPVSVLNLLGDPENLFSITVHANGAPIVILQSEKAYTFDDKKLGWVCISDGWWAEHSEAWDGRTRSRGSEVSVRDPVRAIEAEINTMYVRRVHGDNQVGAQEESDDDQTPPVEMSVPEDKKSDFVIAVTLRHLEARILAATILDSANEYKNHLIAYAKRIAEEGIKNQAEDLIKSLIGPIYYKPEKNQDAAWQPTILGFDKRQLCGQVLQILARPRNLTSLVQPYQEILANMKA.

WD repeat units follow at residues 18–57 (GKLS…NPRA), 72–111 (RHTG…MGGG), 131–170 (GHES…RLRI), 173–212 (GHQG…LERS), 221–261 (PSTA…SWSS), 267–316 (GHEN…PVLV), and 320–359 (VFER…ISDA). Disordered regions lie at residues 387 to 438 (ALPI…RLHQ), 591 to 638 (KKRK…PGPK), and 880 to 899 (QVGA…EMSV). The span at 598–608 (AEAGSDSDDIE) shows a compositional bias: acidic residues. Basic and acidic residues predominate over residues 618-638 (TRADIGRTLGSEHPRDPPGPK).

Belongs to the WD repeat HIR1 family.

The protein resides in the nucleus. Required for replication-independent chromatin assembly and for the periodic repression of histone gene transcription during the cell cycle. This is Protein HIR1 (HIR1) from Mycosarcoma maydis (Corn smut fungus).